A 572-amino-acid chain; its full sequence is Receptor-transporting protein 5 (572 aa).

The 3CxxC-type zinc-finger motif lies at 52-148 (SRLQCGHCPG…AYEGCCEACE (97 aa)). A helical transmembrane segment spans residues 544–560 (FWIWVSMTVCVFWLMCM).

Its subcellular location is the membrane. This chain is Receptor-transporting protein 5 (RTP5), found in Homo sapiens (Human).